We begin with the raw amino-acid sequence, 574 residues long: Alpha-mannosidase I MNS5 (574 aa).

The Cytoplasmic portion of the chain corresponds to 1 to 9 (MSCPIHPRR). A helical; Signal-anchor for type II membrane protein transmembrane segment spans residues 10–26 (LFLCLLISLTFFVVDPS). At 27–574 (SQHIEVKKKQ…VGYCGLWNPL (548 aa)) the chain is on the lumenal side. Residues asparagine 89, asparagine 107, and asparagine 121 are each glycosylated (N-linked (GlcNAc...) asparagine). Residue glutamate 134 is the Proton donor of the active site. Asparagine 201 carries N-linked (GlcNAc...) asparagine glycosylation. Aspartate 274 is a catalytic residue. A glycan (N-linked (GlcNAc...) asparagine) is linked at asparagine 349. Catalysis depends on glutamate 367, which acts as the Proton donor. The active site involves glutamate 388. Threonine 471 lines the Ca(2+) pocket. An N-linked (GlcNAc...) asparagine glycan is attached at asparagine 494.

Belongs to the glycosyl hydrolase 47 family. The cofactor is Ca(2+).

It is found in the endoplasmic reticulum membrane. The protein operates within protein modification; protein glycosylation. Can convert Man(9)GlcNAc(2) and Man(8)GlcNAc(2) into N-glycans with a terminal alpha-1,6-linked Man residue in the C-branch. Functions in the formation of unique N-glycan structures that are specifically recognized by components of the endoplasmic reticulum-associated degradation (ERAD) machinery, which leads to the degradation of misfolded glycoproteins. Most likely generates N-glycan signal on misfolded glycoproteins that is subsequently recognized by OS9. Required for ERAD of the heavily glycosylated and misfolded BRI1 variants BRI1-5 and BRI1-9. Does not seem to play role in N-glycan processing of correctly folded proteins destined for secretion. The sequence is that of Alpha-mannosidase I MNS5 (MNS5) from Arabidopsis thaliana (Mouse-ear cress).